A 1956-amino-acid polypeptide reads, in one-letter code: Sodium channel protein type 10 subunit alpha (1956 aa).

Residues 1–125 lie on the Cytoplasmic side of the membrane; sequence MELPFASVGT…FNLIRRTAIK (125 aa). Residues 31 to 54 are disordered; that stretch reads HRAAKKARTKHRGQEDKGEKPRPQ. The segment covering 32–41 has biased composition (basic residues); it reads RAAKKARTKH. Over residues 42 to 54 the composition is skewed to basic and acidic residues; that stretch reads RGQEDKGEKPRPQ. An I repeat occupies 116-404; it reads FNLIRRTAIK…VTMAYEEQSQ (289 aa). Residues 126–149 traverse the membrane as a helical segment; the sequence is VSVHSWFSIFITITILVNCVCMTR. The Extracellular segment spans residues 150-154; sequence TDLPE. The helical transmembrane segment at 155 to 174 threads the bilayer; that stretch reads KVEYVFTVIYTFEALIKILA. Topologically, residues 175-187 are cytoplasmic; sequence RGFCLNEFTYLRD. Residues 188–206 traverse the membrane as a helical segment; sequence PWNWLDFSVITLAYVGAAI. Residues 207–212 are Extracellular-facing; it reads DLRGIS. A helical; Voltage-sensor transmembrane segment spans residues 213-232; sequence GLRTFRVLRALKTVSVIPGL. Topologically, residues 233–248 are cytoplasmic; that stretch reads KVIVGALIHSVRKLAD. The helical transmembrane segment at 249–272 threads the bilayer; that stretch reads VTILTVFCLSVFALVGLQLFKGNL. At 273 to 340 the chain is on the extracellular side; it reads KNKCIRNGTD…PDFNYTSFDS (68 aa). Cys-276 and Cys-318 are oxidised to a cystine. Asn-279, Asn-288, Asn-311, and Asn-334 each carry an N-linked (GlcNAc...) asparagine glycan. The pore-forming intramembrane region spans 341–365; the sequence is FAWAFLSLFRLMTQDSWERLYQQTL. Residues 366-372 are Extracellular-facing; sequence RASGKMY. A helical transmembrane segment spans residues 373-398; sequence MVFFVLVIFLGSFYLVNLILAVVTMA. Residues 399–658 are Cytoplasmic-facing; that stretch reads YEEQSQATIA…KWRKFKMALF (260 aa). A phosphoserine mark is found at Ser-440, Ser-443, Ser-466, and Ser-478. Over residues 441–453 the composition is skewed to polar residues; the sequence is LQSHSGSPLASKN. Disordered stretches follow at residues 441–484 and 537–581; these read LQSH…YNQR and LLGR…AGAP. The span at 475–484 shows a compositional bias: polar residues; it reads SPQSDPYNQR. 2 positions are modified to phosphoserine: Ser-611 and Ser-614. Residues 646–910 form an II repeat; that stretch reads CCPKWRKFKM…EDDGEVNNLQ (265 aa). Residues 659-683 traverse the membrane as a helical segment; it reads ELVTDPFAELTITLCIVVNTVFMAM. Residues 684-694 are Extracellular-facing; the sequence is EHYPMTDAFDA. A helical membrane pass occupies residues 695-718; sequence MLQAGNIVFTVFFTMEMAFKIIAF. Over 719-726 the chain is Cytoplasmic; that stretch reads DPYYYFQK. Residues 727 to 746 traverse the membrane as a helical segment; the sequence is KWNIFDCVIVTVSLLELSAS. Over 747–752 the chain is Extracellular; the sequence is KKGSLS. Residues 753–772 traverse the membrane as a helical; Voltage-sensor segment; that stretch reads VLRTFRLLRVFKLAKSWPTL. Residues 773–788 lie on the Cytoplasmic side of the membrane; it reads NTLIKIIGNSVGALGN. Residues 789–809 form a helical membrane-spanning segment; it reads LTFILAIIVFIFALVGKQLLS. Residues 810-833 are Extracellular-facing; it reads EDYGCRKDGVSVWNGEKLRWHMCD. The segment at residues 834–854 is an intramembrane region (pore-forming); that stretch reads FFHSFLVVFRILCGEWIENMW. The Extracellular segment spans residues 855 to 863; that stretch reads VCMEVSQKS. The cysteines at positions 856 and 865 are disulfide-linked. A helical transmembrane segment spans residues 864–889; that stretch reads ICLILFLTVMVLGNLVVLNLFIALLL. The Cytoplasmic segment spans residues 890 to 1148; that stretch reads NSFSADNLTA…GWQVRKTCYR (259 aa). The disordered stretch occupies residues 1008-1094; that stretch reads DELEEDMEQA…SEGSTVDCPD (87 aa). The stretch at 1141–1450 is one III repeat; that stretch reads QVRKTCYRIV…KKYYNAMKKL (310 aa). Residues 1149 to 1172 form a helical membrane-spanning segment; the sequence is IVEHSWFESFIIFMILLSSGALAF. At 1173–1185 the chain is on the extracellular side; sequence EDNYLEEKPRVKS. A helical transmembrane segment spans residues 1186-1211; that stretch reads VLEYTDRVFTFIFVFEMLLKWVAYGF. Over 1212-1217 the chain is Cytoplasmic; that stretch reads KKYFTN. The chain crosses the membrane as a helical span at residues 1218–1239; that stretch reads AWCWLDFLIVNISLTSLIAKIL. The Extracellular segment spans residues 1240-1243; it reads EYSD. Residues 1244 to 1265 form a helical; Voltage-sensor membrane-spanning segment; that stretch reads VASIKALRTLRALRPLRALSRF. Over 1266 to 1284 the chain is Cytoplasmic; the sequence is EGMRVVVDALVGAIPSIMN. The chain crosses the membrane as a helical span at residues 1285–1312; that stretch reads VLLVCLIFWLIFSIMGVNLFAGKFSKCV. Over 1313–1354 the chain is Extracellular; it reads DTRNNPFSNVNSTMVNNKSECHNQNSTGHFFWVNVKVNFDNV. N-linked (GlcNAc...) asparagine glycosylation is found at Asn-1323, Asn-1329, and Asn-1337. An intramembrane region (pore-forming) is located at residues 1355–1376; that stretch reads AMGYLALLQVATFKGWMDIMYA. Residues 1377–1392 lie on the Extracellular side of the membrane; that stretch reads AVDSGEINSQPNWENN. A helical membrane pass occupies residues 1393 to 1419; sequence LYMYLYFVVFIIFGGFFTLNLFVGVII. Topologically, residues 1420–1472 are cytoplasmic; that stretch reads DNFNQQKKKLGGQDIFMTEEQKKYYNAMKKLGSKKPQKPIPRPLNKYQGFVFD. Ser-1452 carries the phosphoserine; by PKC modification. Residues 1459 to 1758 form an IV repeat; it reads IPRPLNKYQG…WEKFDPEATQ (300 aa). Residues 1473–1496 traverse the membrane as a helical segment; that stretch reads IVTRQAFDIIIMVLICLNMITMMV. The Extracellular segment spans residues 1497–1507; the sequence is ETDEQGEEKTK. A helical transmembrane segment spans residues 1508–1531; sequence VLGRINQFFVAVFTGECVMKMFAL. Residues 1532 to 1537 are Cytoplasmic-facing; sequence RQYYFT. The helical transmembrane segment at 1538-1561 threads the bilayer; it reads NGWNVFDFIVVILSIGSLLFSAIL. Topologically, residues 1562-1573 are extracellular; that stretch reads KSLENYFSPTLF. Residues 1574–1595 traverse the membrane as a helical; Voltage-sensor segment; sequence RVIRLARIGRILRLIRAAKGIR. Residues 1596 to 1610 are Cytoplasmic-facing; the sequence is TLLFALMMSLPALFN. A helical transmembrane segment spans residues 1611 to 1633; it reads IGLLLFLVMFIYSIFGMASFANV. The Extracellular portion of the chain corresponds to 1634–1647; it reads VDEAGIDDMFNFKT. Residues 1648-1670 constitute an intramembrane region (pore-forming); that stretch reads FGNSMLCLFQITTSAGWDGLLSP. Topologically, residues 1671 to 1698 are extracellular; sequence ILNTGPPYCDPNLPNSNGSRGNCGSPAV. A glycan (N-linked (GlcNAc...) asparagine) is linked at Asn-1687. The chain crosses the membrane as a helical span at residues 1699–1723; that stretch reads GIIFFTTYIIISFLIVVNMYIAVIL. The Cytoplasmic segment spans residues 1724–1956; it reads ENFNVATEES…AKEGNSPGPQ (233 aa). An IQ domain is found at 1852–1881; the sequence is EDLSATVIQKAYRSYMLHRSLTLSNTLHVP. The tract at residues 1906–1956 is disordered; it reads DKSETASATSFPPSYDSVTRGLSDRANINPSSSMQNEDEVAAKEGNSPGPQ. Residues 1931–1940 show a composition bias toward polar residues; the sequence is ANINPSSSMQ.

Belongs to the sodium channel (TC 1.A.1.10) family. Nav1.8/SCN10A subfamily. As to quaternary structure, the channel consists of an ion conducting pore forming alpha-subunit regulated by one or more associated auxiliary subunits SCN1B, SCN2B and SCN3B; electrophysiological properties may vary depending on the type of the associated beta subunits. Found in a number of complexes with PRX, DYNLT1 and PDZD2. Interacts with proteins such as FSTL1, PRX, DYNLT1, PDZD2, S100A10 and many others. Interacts with NEDD4 and NEDD4L. Post-translationally, ubiquitinated by NEDD4L; which promotes its endocytosis. Phosphorylation at Ser-1452 by PKC in a highly conserved cytoplasmic loop slows inactivation of the sodium channel and reduces peak sodium currents. In terms of processing, lacks the cysteine which covalently binds the conotoxin GVIIJ. This cysteine (position 815) is speculated in other sodium channel subunits alpha to be implied in covalent binding with the sodium channel subunit beta-2 or beta-4. In terms of tissue distribution, expressed in dorsal root ganglia, trigeminal ganglia, nodose ganglia and sciatic nerve.

The protein resides in the cell membrane. The enzyme catalyses Na(+)(in) = Na(+)(out). Functionally, tetrodotoxin-resistant channel that mediates the voltage-dependent sodium ion permeability of excitable membranes. Assuming opened or closed conformations in response to the voltage difference across the membrane, the protein forms a sodium-selective channel through which sodium ions may pass in accordance with their electrochemical gradient. Plays a role in neuropathic pain mechanisms. This chain is Sodium channel protein type 10 subunit alpha, found in Rattus norvegicus (Rat).